The primary structure comprises 557 residues: Potassium-transporting ATPase potassium-binding subunit (557 aa).

12 consecutive transmembrane segments (helical) span residues 5 to 25 (GFLLIATFLLVLMVLARPLGS), 63 to 83 (LCAILGLNMLGLAVLFFMLLG), 132 to 152 (GLTVQNFLSAASGIAVIFALI), 170 to 190 (LLRITLWVLVPVALLIALFFI), 253 to 273 (FVQMLAIFLIPTALCFAFGEV), 283 to 303 (LLWAMSVIFVICVGVVMWAEV), 329 to 349 (VLVSSLFAVVTTAASCGAVIA), 356 to 376 (ALGGMVPMWLMQIGEVVFGGV), 379 to 399 (GLYGMMLFVLLAVFIAGLMIG), 416 to 436 (LTALAILVTPTLVLMGAALAM), 484 to 504 (LLAFCMFVGRFGVIIPVMAIA), and 526 to 546 (LFVGLLIGTVLLVGALTFIPA).

Belongs to the KdpA family. As to quaternary structure, the system is composed of three essential subunits: KdpA, KdpB and KdpC.

Its subcellular location is the cell inner membrane. Part of the high-affinity ATP-driven potassium transport (or Kdp) system, which catalyzes the hydrolysis of ATP coupled with the electrogenic transport of potassium into the cytoplasm. This subunit binds the periplasmic potassium ions and delivers the ions to the membrane domain of KdpB through an intramembrane tunnel. In Escherichia coli O9:H4 (strain HS), this protein is Potassium-transporting ATPase potassium-binding subunit.